Here is a 117-residue protein sequence, read N- to C-terminus: Large ribosomal subunit protein bL20c (117 aa).

Belongs to the bacterial ribosomal protein bL20 family.

The protein resides in the plastid. Its subcellular location is the chloroplast. In terms of biological role, binds directly to 23S ribosomal RNA and is necessary for the in vitro assembly process of the 50S ribosomal subunit. It is not involved in the protein synthesizing functions of that subunit. The chain is Large ribosomal subunit protein bL20c (rpl20) from Arabidopsis thaliana (Mouse-ear cress).